The chain runs to 212 residues: Pyridoxine/pyridoxamine 5'-phosphate oxidase (212 aa).

Substrate contacts are provided by residues 8-11 and Lys-66; that span reads RREY. FMN is bound by residues 61-66, 76-77, Arg-82, Lys-83, and Gln-105; these read RIVLLK and FT. Residues Tyr-123, Arg-127, and Ser-131 each coordinate substrate. FMN-binding positions include 140 to 141 and Trp-185; that span reads QS. 191–193 lines the substrate pocket; the sequence is RLH. Position 195 (Arg-195) interacts with FMN.

This sequence belongs to the pyridoxamine 5'-phosphate oxidase family. Homodimer. It depends on FMN as a cofactor.

It carries out the reaction pyridoxamine 5'-phosphate + O2 + H2O = pyridoxal 5'-phosphate + H2O2 + NH4(+). The enzyme catalyses pyridoxine 5'-phosphate + O2 = pyridoxal 5'-phosphate + H2O2. It participates in cofactor metabolism; pyridoxal 5'-phosphate salvage; pyridoxal 5'-phosphate from pyridoxamine 5'-phosphate: step 1/1. It functions in the pathway cofactor metabolism; pyridoxal 5'-phosphate salvage; pyridoxal 5'-phosphate from pyridoxine 5'-phosphate: step 1/1. Catalyzes the oxidation of either pyridoxine 5'-phosphate (PNP) or pyridoxamine 5'-phosphate (PMP) into pyridoxal 5'-phosphate (PLP). This chain is Pyridoxine/pyridoxamine 5'-phosphate oxidase, found in Shewanella sp. (strain MR-4).